We begin with the raw amino-acid sequence, 40 residues long: Photosystem II reaction center protein L (40 aa).

The chain crosses the membrane as a helical span at residues 19–39 (SLYWGLLLIFVLAVLFSNYFF).

Belongs to the PsbL family. As to quaternary structure, PSII is composed of 1 copy each of membrane proteins PsbA, PsbB, PsbC, PsbD, PsbE, PsbF, PsbH, PsbI, PsbJ, PsbK, PsbL, PsbM, PsbT, PsbX, PsbY, PsbZ, Psb30/Ycf12, at least 3 peripheral proteins of the oxygen-evolving complex and a large number of cofactors. It forms dimeric complexes.

It localises to the plastid. The protein resides in the chloroplast thylakoid membrane. In terms of biological role, one of the components of the core complex of photosystem II (PSII). PSII is a light-driven water:plastoquinone oxidoreductase that uses light energy to abstract electrons from H(2)O, generating O(2) and a proton gradient subsequently used for ATP formation. It consists of a core antenna complex that captures photons, and an electron transfer chain that converts photonic excitation into a charge separation. This subunit is found at the monomer-monomer interface and is required for correct PSII assembly and/or dimerization. The chain is Photosystem II reaction center protein L from Nandina domestica (Heavenly bamboo).